The sequence spans 596 residues: Elongation factor 4 (596 aa).

In terms of domain architecture, tr-type G spans 2–183 (NNIRNFSIIA…TIIRKIPPPK (182 aa)). Residues 14–19 (DHGKST) and 130–133 (NKID) each bind GTP.

The protein belongs to the TRAFAC class translation factor GTPase superfamily. Classic translation factor GTPase family. LepA subfamily.

The protein localises to the cell inner membrane. The enzyme catalyses GTP + H2O = GDP + phosphate + H(+). Functionally, required for accurate and efficient protein synthesis under certain stress conditions. May act as a fidelity factor of the translation reaction, by catalyzing a one-codon backward translocation of tRNAs on improperly translocated ribosomes. Back-translocation proceeds from a post-translocation (POST) complex to a pre-translocation (PRE) complex, thus giving elongation factor G a second chance to translocate the tRNAs correctly. Binds to ribosomes in a GTP-dependent manner. This Campylobacter fetus subsp. fetus (strain 82-40) protein is Elongation factor 4.